A 288-amino-acid polypeptide reads, in one-letter code: Bifunctional protein FolD (288 aa).

Residues Gly166–Ser168, Ser191, and Ile232 contribute to the NADP(+) site.

The protein belongs to the tetrahydrofolate dehydrogenase/cyclohydrolase family. Homodimer.

It catalyses the reaction (6R)-5,10-methylene-5,6,7,8-tetrahydrofolate + NADP(+) = (6R)-5,10-methenyltetrahydrofolate + NADPH. It carries out the reaction (6R)-5,10-methenyltetrahydrofolate + H2O = (6R)-10-formyltetrahydrofolate + H(+). It functions in the pathway one-carbon metabolism; tetrahydrofolate interconversion. Functionally, catalyzes the oxidation of 5,10-methylenetetrahydrofolate to 5,10-methenyltetrahydrofolate and then the hydrolysis of 5,10-methenyltetrahydrofolate to 10-formyltetrahydrofolate. This chain is Bifunctional protein FolD, found in Rickettsia africae (strain ESF-5).